Here is a 155-residue protein sequence, read N- to C-terminus: Small ribosomal subunit protein uS7 (155 aa).

This sequence belongs to the universal ribosomal protein uS7 family. As to quaternary structure, part of the 30S ribosomal subunit. Contacts proteins S9 and S11.

Functionally, one of the primary rRNA binding proteins, it binds directly to 16S rRNA where it nucleates assembly of the head domain of the 30S subunit. Is located at the subunit interface close to the decoding center, probably blocks exit of the E-site tRNA. In Xanthomonas campestris pv. campestris (strain 8004), this protein is Small ribosomal subunit protein uS7.